A 161-amino-acid polypeptide reads, in one-letter code: Efficient mitochondria targeting-associated protein 19 (161 aa).

Topologically, residues 1 to 10 (MKLGHREQQF) are cytoplasmic. Positions 7–159 (EQQFYLWYFI…PTFLIPLRLC (153 aa)) constitute an EXPERA domain. A helical membrane pass occupies residues 11 to 31 (YLWYFIVHIPITIFIDSSVVI). Residues 32 to 61 (PAKWQLGIAQKVVSDHIAKQHDFLLSEKPE) are Lumenal-facing. A helical transmembrane segment spans residues 62-82 (WLYWFVVLELVLQLPLFVYFV). Topologically, residues 83–101 (NKFWNSSELQVNTNSRLKK) are cytoplasmic. A helical transmembrane segment spans residues 102–122 (WLRIYGWNASLTTLICIVVIF). Over 123 to 141 (KRGYIPYDVLKTSLSMTQK) the chain is Lumenal. The helical transmembrane segment at 142–160 (CQLASVYLPTFLIPLRLCF) threads the bilayer. Valine 161 is a topological domain (cytoplasmic).

The protein belongs to the TMEM97/sigma-2 receptor family.

It localises to the endoplasmic reticulum membrane. In terms of biological role, part of an import route for newly synthesized mitochondrial proteins termed the ER-SURF pathway (ER surface-mediated protein targeting), which retrieves mitochondrial precursor proteins from the ER surface and reroutes them to mitochondria for efficient mitochondrial import. Acts as a quality control factor in the ER, promoting the proteolytic degradation of nonproductive and extramitochondrial precursor proteins in the ER membrane thus removing them from the ER surface. This chain is Efficient mitochondria targeting-associated protein 19, found in Saccharomyces cerevisiae (strain ATCC 204508 / S288c) (Baker's yeast).